Here is a 126-residue protein sequence, read N- to C-terminus: MFEGFKTFVMRGNVIDLAVGVVIGTAFSAVVNSLVNDILMAIVATLIGQPDFSDVLVFGAVRLGAFITTIVNFLIISAALYFLVVVPINKLSEFTRRNEPPPAPPAPSAEEKLLTEIRDLLRQNIT.

Helical transmembrane passes span 14 to 34 and 66 to 86; these read VIDLAVGVVIGTAFSAVVNSL and FITTIVNFLIISAALYFLVVV.

It belongs to the MscL family. Homopentamer.

The protein resides in the cell membrane. Channel that opens in response to stretch forces in the membrane lipid bilayer. May participate in the regulation of osmotic pressure changes within the cell. In Roseiflexus sp. (strain RS-1), this protein is Large-conductance mechanosensitive channel.